The chain runs to 530 residues: Probable serine/threonine-protein kinase fnkB (530 aa).

The Protein kinase domain occupies tryptophan 11–leucine 268. ATP contacts are provided by residues leucine 17–asparagine 25 and lysine 43. Aspartate 131 acts as the Proton acceptor in catalysis.

Belongs to the protein kinase superfamily. STE Ser/Thr protein kinase family. Mg(2+) is required as a cofactor.

The catalysed reaction is L-seryl-[protein] + ATP = O-phospho-L-seryl-[protein] + ADP + H(+). The enzyme catalyses L-threonyl-[protein] + ATP = O-phospho-L-threonyl-[protein] + ADP + H(+). The sequence is that of Probable serine/threonine-protein kinase fnkB from Dictyostelium discoideum (Social amoeba).